We begin with the raw amino-acid sequence, 610 residues long: DNA mismatch repair protein MutL (610 aa).

Belongs to the DNA mismatch repair MutL/HexB family.

This protein is involved in the repair of mismatches in DNA. It is required for dam-dependent methyl-directed DNA mismatch repair. May act as a 'molecular matchmaker', a protein that promotes the formation of a stable complex between two or more DNA-binding proteins in an ATP-dependent manner without itself being part of a final effector complex. In Rickettsia africae (strain ESF-5), this protein is DNA mismatch repair protein MutL.